A 145-amino-acid chain; its full sequence is Succinate dehydrogenase assembly factor 2, mitochondrial (145 aa).

It belongs to the SDHAF2 family. As to quaternary structure, interacts with the flavoprotein subunit within the SDH catalytic dimer.

Its subcellular location is the mitochondrion matrix. Plays an essential role in the assembly of succinate dehydrogenase (SDH), an enzyme complex (also referred to as respiratory complex II) that is a component of both the tricarboxylic acid (TCA) cycle and the mitochondrial electron transport chain, and which couples the oxidation of succinate to fumarate with the reduction of ubiquinone (coenzyme Q) to ubiquinol. Required for flavinylation (covalent attachment of FAD) of the flavoprotein subunit of the SDH catalytic dimer. This is Succinate dehydrogenase assembly factor 2, mitochondrial from Yarrowia lipolytica (strain CLIB 122 / E 150) (Yeast).